Here is a 1706-residue protein sequence, read N- to C-terminus: Serine/threonine-protein kinase vps15 (1706 aa).

The region spanning 24-293 (YHNERSLGDS…YLQKYRGTVF (270 aa)) is the Protein kinase domain. ATP is bound by residues 30-38 (LGDSHFLRT) and lysine 52. The HEAT 1 repeat unit spans residues 56 to 94 (NKLPEISLSSIVNLLKEEQENISYRVPNAVPYIKTLVTL). The Proton acceptor role is filled by aspartate 146. 7 HEAT repeats span residues 426–465 (LYGAAVLLPIVLSTIRHVNTRESKINALSLVQILSRNICD), 466–504 (ESKLDTVLPFVMTLLRDQYADVRISALITITRLVSNVTS), 511–549 (FLFQEYLFPDLQHFLFDMNSRTRATYASCLPILAKQASK), 587–625 (HDLVVTVERHVSTLLADSSSIVRRSLLNALAPLCVFFGK), 626–664 (AKSNDLILSHLITYLNDTDWMLRCAFFESITGLSIFIGP), 665–703 (RSVDEYILPLMLQALVDPEPAVLESVLGSFSGLIELHLF), and 705–743 (KLVVVDILQLVLPLVAVPNAYIRRAALSVIYSAYQSFDD). Residue serine 957 is modified to Phosphoserine. The residue at position 958 (tyrosine 958) is a Phosphotyrosine. The disordered stretch occupies residues 982–1099 (TTKPKDVSQS…GKSLAPLISS (118 aa)). 2 stretches are compositionally biased toward basic and acidic residues: residues 984 to 1002 (KPKDVSQSDIKVDINRESN) and 1014 to 1023 (DVYRQTDNPE). Residues 1029–1055 (DTASSKVDTHNPTVTQPTDDTGGLNSY) show a composition bias toward polar residues. Positions 1056–1069 (NTENPLLTNNTLEP) are enriched in low complexity. A compositionally biased stretch (basic and acidic residues) spans 1079–1090 (KDSDKHAKESKG). 2 WD repeats span residues 1213-1252 (LLDGGTKKVLVSPDSSFFVTLGSDGVVRAWQLVESVRHIS) and 1368-1407 (LQCGSATSVVVSEGCNWALIGTTKGWLLLWDLRFGTLSCS). Positions 1431 to 1442 (NEYTSGNNNSPV) are enriched in polar residues. The segment at 1431-1461 (NEYTSGNNNSPVTKVPGSSSTSSSSTQPINS) is disordered. Residues 1577–1622 (CISSPIYRYRGPSAGSVEREPLFLIAASGSPHAFIWNPHNVSASSS) form a WD 3 repeat.

The protein belongs to the protein kinase superfamily. Ser/Thr protein kinase family. Component of the autophagy-specific vps34 PI3-kinase complex I composed of vps15, atg6, pik3/vps34, atg14 and atg38. Also a component of the vps34 PI3-kinase complex II composed of atg6, pik3, vps15 and vps38.

The catalysed reaction is L-seryl-[protein] + ATP = O-phospho-L-seryl-[protein] + ADP + H(+). It carries out the reaction L-threonyl-[protein] + ATP = O-phospho-L-threonyl-[protein] + ADP + H(+). Its function is as follows. Functions as a part of the autophagy-specific VPS34 PI3-kinase complex I that plays a role in autophagosome assembly. This complex is essential to recruit the atg8-phosphatidylinositol conjugate and the atg12-atg5 conjugate to the pre-autophagosomal structure. Also functions as part of the VPS34 PI3-kinase complex II. This Schizosaccharomyces pombe (strain 972 / ATCC 24843) (Fission yeast) protein is Serine/threonine-protein kinase vps15.